A 318-amino-acid chain; its full sequence is Aldo-keto reductase family 1 member C21 (318 aa).

20 to 24 lines the NADP(+) pocket; the sequence is GFGTA. Lys-31 provides a ligand contact to substrate. Asp-50 contributes to the NADP(+) binding site. Catalysis depends on Tyr-55, which acts as the Proton donor. His-117 provides a ligand contact to substrate. Residues 166–167, Gln-190, 216–224, and 270–280 each bind NADP(+); these read SN, YGVLGTQRY, and TSLKEERIKEN.

It belongs to the aldo/keto reductase family. Monomer.

The protein localises to the cytoplasm. It catalyses the reaction androsterone + NADP(+) = 5alpha-androstan-3,17-dione + NADPH + H(+). It carries out the reaction androsterone + NAD(+) = 5alpha-androstan-3,17-dione + NADH + H(+). Its function is as follows. NADP-dependent 17-alpha-hydroxysteroid dehydrogenase that converts 5-alpha-androstane-3,17-dione into androsterone. Has lower 3-alpha-hydroxysteroid dehydrogenase activity. Has broad substrate specificity and acts on various 17-alpha-hydroxysteroids, 17-ketosteroids, 3-alpha hydroxysteroids and 3-ketosteroids. Reduction of keto groups is strictly stereoselective. Reduction of 17-ketosteroids yields only 17-alpha-hydroxysteroids. Likewise, reduction of 3-ketosteroids yields only 3-alpha-hydroxysteroids. The protein is Aldo-keto reductase family 1 member C21 (Akr1c21) of Rattus norvegicus (Rat).